A 193-amino-acid chain; its full sequence is ATP-dependent Clp protease proteolytic subunit (193 aa).

The active-site Nucleophile is S98. H123 is an active-site residue.

The protein belongs to the peptidase S14 family. Fourteen ClpP subunits assemble into 2 heptameric rings which stack back to back to give a disk-like structure with a central cavity, resembling the structure of eukaryotic proteasomes.

The protein resides in the cytoplasm. The enzyme catalyses Hydrolysis of proteins to small peptides in the presence of ATP and magnesium. alpha-casein is the usual test substrate. In the absence of ATP, only oligopeptides shorter than five residues are hydrolyzed (such as succinyl-Leu-Tyr-|-NHMec, and Leu-Tyr-Leu-|-Tyr-Trp, in which cleavage of the -Tyr-|-Leu- and -Tyr-|-Trp bonds also occurs).. Its function is as follows. Cleaves peptides in various proteins in a process that requires ATP hydrolysis. Has a chymotrypsin-like activity. Plays a major role in the degradation of misfolded proteins. The chain is ATP-dependent Clp protease proteolytic subunit from Histophilus somni (strain 2336) (Haemophilus somnus).